The sequence spans 152 residues: uncharacterized protein (152 aa).

Positions 3-143 (EQKLCQAINL…IIEIFTILKS (141 aa)) constitute an HTH marR-type domain. A DNA-binding region (H-T-H motif) is located at residues 55 to 78 (PGSLAMYQNVHKSAISNRLKKLLE).

This is an uncharacterized protein from Bacillus subtilis (strain 168).